A 486-amino-acid polypeptide reads, in one-letter code: Cysteine--tRNA ligase (486 aa).

Cysteine 29 contacts Zn(2+). The 'HIGH' region signature appears at 31–41 (VTVYDYCHLGH). Positions 217, 242, and 246 each coordinate Zn(2+). Positions 274–278 (KMSKS) match the 'KMSKS' region motif. Lysine 277 lines the ATP pocket.

It belongs to the class-I aminoacyl-tRNA synthetase family. As to quaternary structure, monomer. Requires Zn(2+) as cofactor.

It localises to the cytoplasm. The enzyme catalyses tRNA(Cys) + L-cysteine + ATP = L-cysteinyl-tRNA(Cys) + AMP + diphosphate. This chain is Cysteine--tRNA ligase, found in Thermosynechococcus vestitus (strain NIES-2133 / IAM M-273 / BP-1).